Reading from the N-terminus, the 115-residue chain is T cell receptor beta variable 7-8 (115 aa).

The N-terminal stretch at 1 to 21 (MGTRLLCWVVLGFLGTDHTGA) is a signal peptide. In terms of domain architecture, Ig-like spans 22 to 115 (GVSQSPRYKV…SAVYLCASSL (94 aa)). Cys-42 and Cys-111 are joined by a disulfide.

Alpha-beta TR is a heterodimer composed of an alpha and beta chain; disulfide-linked. The alpha-beta TR is associated with the transmembrane signaling CD3 coreceptor proteins to form the TR-CD3 (TcR or TCR). The assembly of alpha-beta TR heterodimers with CD3 occurs in the endoplasmic reticulum where a single alpha-beta TR heterodimer associates with one CD3D-CD3E heterodimer, one CD3G-CD3E heterodimer and one CD247 homodimer forming a stable octameric structure. CD3D-CD3E and CD3G-CD3E heterodimers preferentially associate with TR alpha and TR beta chains, respectively. The association of the CD247 homodimer is the last step of TcR assembly in the endoplasmic reticulum and is required for transport to the cell surface.

The protein localises to the cell membrane. V region of the variable domain of T cell receptor (TR) beta chain that participates in the antigen recognition. Alpha-beta T cell receptors are antigen specific receptors which are essential to the immune response and are present on the cell surface of T lymphocytes. Recognize peptide-major histocompatibility (MH) (pMH) complexes that are displayed by antigen presenting cells (APC), a prerequisite for efficient T cell adaptive immunity against pathogens. Binding of alpha-beta TR to pMH complex initiates TR-CD3 clustering on the cell surface and intracellular activation of LCK that phosphorylates the ITAM motifs of CD3G, CD3D, CD3E and CD247 enabling the recruitment of ZAP70. In turn ZAP70 phosphorylates LAT, which recruits numerous signaling molecules to form the LAT signalosome. The LAT signalosome propagates signal branching to three major signaling pathways, the calcium, the mitogen-activated protein kinase (MAPK) kinase and the nuclear factor NF-kappa-B (NF-kB) pathways, leading to the mobilization of transcription factors that are critical for gene expression and essential for T cell growth and differentiation. The T cell repertoire is generated in the thymus, by V-(D)-J rearrangement. This repertoire is then shaped by intrathymic selection events to generate a peripheral T cell pool of self-MH restricted, non-autoaggressive T cells. Post-thymic interaction of alpha-beta TR with the pMH complexes shapes TR structural and functional avidity. In Homo sapiens (Human), this protein is T cell receptor beta variable 7-8.